Reading from the N-terminus, the 173-residue chain is Putative metal-dependent hydrolase BA_2700/GBAA_2700/BAS2515 (173 aa).

3 residues coordinate Zn(2+): His65, His156, and His160.

This sequence belongs to the metal hydrolase YfiT family. In terms of assembly, homodimer. Zn(2+) serves as cofactor.

Its subcellular location is the cytoplasm. Its function is as follows. Possible metal-dependent hydrolase. This chain is Putative metal-dependent hydrolase BA_2700/GBAA_2700/BAS2515, found in Bacillus anthracis.